We begin with the raw amino-acid sequence, 534 residues long: ATP-dependent rRNA helicase RRP3 (534 aa).

Residues 67–107 form a disordered region; it reads KQQALQKQQKQQKQQEQENANHNQTESSLSSSSSTTSSSIT. Low complexity-rich tracts occupy residues 68 to 80 and 91 to 107; these read QQALQKQQKQQKQ and TESSLSSSSSTTSSSIT. The short motif at 118–146 is the Q motif element; it reads KTFKELNLVPDLLESIESMKFTKPTPIQS. A Helicase ATP-binding domain is found at 149–320; sequence IPHALEGKDI…RASLHNPVRV (172 aa). Residue 162–169 participates in ATP binding; it reads AQTGSGKT. Positions 268–271 match the DEAD box motif; it reads DEAD. The 146-residue stretch at 347 to 492 folds into the Helicase C-terminal domain; sequence ILIHLLNEFM…EDKPPKEVLD (146 aa). Basic and acidic residues-rich tracts occupy residues 505-517 and 525-534; these read AIRQTKEIHDKRN and NRDDADREER. The segment at 505–534 is disordered; sequence AIRQTKEIHDKRNGGGGRRRNRDDADREER.

The protein belongs to the DEAD box helicase family. DDX47/RRP3 subfamily. Interacts with the SSU processome.

Its subcellular location is the nucleus. It catalyses the reaction ATP + H2O = ADP + phosphate + H(+). In terms of biological role, ATP-dependent rRNA helicase required for pre-ribosomal RNA processing. Involved in the maturation of the 35S-pre-rRNA and to its cleavage to mature 18S rRNA. The sequence is that of ATP-dependent rRNA helicase RRP3 from Candida albicans (strain SC5314 / ATCC MYA-2876) (Yeast).